Consider the following 174-residue polypeptide: Phospholipase A2-like protein Y52B11A.8 (174 aa).

An N-terminal signal peptide occupies residues 1–18 (MRGLLVATWIFVSVAASA). N-linked (GlcNAc...) asparagine glycans are attached at residues Asn-49 and Asn-143. The interval 137-174 (YEASGPNASTTEESPAEKDDYDYESHVAGLNATPSSST) is disordered.

The protein belongs to the phospholipase A2 family.

It localises to the secreted. This Caenorhabditis elegans protein is Phospholipase A2-like protein Y52B11A.8.